The primary structure comprises 426 residues: Histidine--tRNA ligase (426 aa).

It belongs to the class-II aminoacyl-tRNA synthetase family. Homodimer.

It is found in the cytoplasm. It catalyses the reaction tRNA(His) + L-histidine + ATP = L-histidyl-tRNA(His) + AMP + diphosphate + H(+). The sequence is that of Histidine--tRNA ligase from Prochlorococcus marinus (strain MIT 9301).